We begin with the raw amino-acid sequence, 208 residues long: Urease accessory protein UreG (208 aa).

12 to 19 (GPVGAGKT) lines the GTP pocket.

This sequence belongs to the SIMIBI class G3E GTPase family. UreG subfamily. In terms of assembly, homodimer. UreD, UreF and UreG form a complex that acts as a GTP-hydrolysis-dependent molecular chaperone, activating the urease apoprotein by helping to assemble the nickel containing metallocenter of UreC. The UreE protein probably delivers the nickel.

The protein localises to the cytoplasm. Its function is as follows. Facilitates the functional incorporation of the urease nickel metallocenter. This process requires GTP hydrolysis, probably effectuated by UreG. The protein is Urease accessory protein UreG of Rhodobacter capsulatus (Rhodopseudomonas capsulata).